Consider the following 177-residue polypeptide: ATP synthase subunit delta (177 aa).

This sequence belongs to the ATPase delta chain family. As to quaternary structure, F-type ATPases have 2 components, F(1) - the catalytic core - and F(0) - the membrane proton channel. F(1) has five subunits: alpha(3), beta(3), gamma(1), delta(1), epsilon(1). F(0) has three main subunits: a(1), b(2) and c(10-14). The alpha and beta chains form an alternating ring which encloses part of the gamma chain. F(1) is attached to F(0) by a central stalk formed by the gamma and epsilon chains, while a peripheral stalk is formed by the delta and b chains.

The protein localises to the cell inner membrane. In terms of biological role, f(1)F(0) ATP synthase produces ATP from ADP in the presence of a proton or sodium gradient. F-type ATPases consist of two structural domains, F(1) containing the extramembraneous catalytic core and F(0) containing the membrane proton channel, linked together by a central stalk and a peripheral stalk. During catalysis, ATP synthesis in the catalytic domain of F(1) is coupled via a rotary mechanism of the central stalk subunits to proton translocation. Its function is as follows. This protein is part of the stalk that links CF(0) to CF(1). It either transmits conformational changes from CF(0) to CF(1) or is implicated in proton conduction. This chain is ATP synthase subunit delta, found in Shewanella baltica (strain OS223).